Consider the following 90-residue polypeptide: Small ribosomal subunit protein uS17 (90 aa).

Belongs to the universal ribosomal protein uS17 family. As to quaternary structure, part of the 30S ribosomal subunit.

In terms of biological role, one of the primary rRNA binding proteins, it binds specifically to the 5'-end of 16S ribosomal RNA. The sequence is that of Small ribosomal subunit protein uS17 from Treponema denticola (strain ATCC 35405 / DSM 14222 / CIP 103919 / JCM 8153 / KCTC 15104).